The sequence spans 388 residues: Phosphopentomutase (388 aa).

The Mn(2+) site is built by aspartate 10, aspartate 282, histidine 287, aspartate 323, histidine 324, and histidine 335.

Belongs to the phosphopentomutase family. The cofactor is Mn(2+).

Its subcellular location is the cytoplasm. The catalysed reaction is 2-deoxy-alpha-D-ribose 1-phosphate = 2-deoxy-D-ribose 5-phosphate. The enzyme catalyses alpha-D-ribose 1-phosphate = D-ribose 5-phosphate. Its pathway is carbohydrate degradation; 2-deoxy-D-ribose 1-phosphate degradation; D-glyceraldehyde 3-phosphate and acetaldehyde from 2-deoxy-alpha-D-ribose 1-phosphate: step 1/2. In terms of biological role, isomerase that catalyzes the conversion of deoxy-ribose 1-phosphate (dRib-1-P) and ribose 1-phosphate (Rib-1-P) to deoxy-ribose 5-phosphate (dRib-5-P) and ribose 5-phosphate (Rib-5-P), respectively. The chain is Phosphopentomutase from Carboxydothermus hydrogenoformans (strain ATCC BAA-161 / DSM 6008 / Z-2901).